The chain runs to 276 residues: Large ribosomal subunit protein uL2 (276 aa).

Residues Arg-221 to Lys-276 form a disordered region. Residues Lys-252–Lys-276 show a composition bias toward basic residues.

The protein belongs to the universal ribosomal protein uL2 family. In terms of assembly, part of the 50S ribosomal subunit. Forms a bridge to the 30S subunit in the 70S ribosome.

Its function is as follows. One of the primary rRNA binding proteins. Required for association of the 30S and 50S subunits to form the 70S ribosome, for tRNA binding and peptide bond formation. It has been suggested to have peptidyltransferase activity; this is somewhat controversial. Makes several contacts with the 16S rRNA in the 70S ribosome. The polypeptide is Large ribosomal subunit protein uL2 (Aster yellows witches'-broom phytoplasma (strain AYWB)).